Consider the following 512-residue polypeptide: Vacuolar protein sorting-associated protein 30 (512 aa).

Positions 294–511 (TNIYNESFRI…LVFCSSKLSL (218 aa)) are BARA.

This sequence belongs to the beclin family. As to quaternary structure, component of the autophagy-specific VPS34 PI3-kinase complex I composed of VPS15, VPS30, VPS34, ATG14 and ATG38; and of the VPS34 PI3-kinase complex II composed of VPS15, VPS30, VPS34 and VPS38.

Its subcellular location is the endosome membrane. It is found in the vacuole membrane. It localises to the preautophagosomal structure membrane. Functionally, required for cytoplasm to vacuole transport (Cvt), autophagy, nucleophagy, and mitophagy, as a part of the autophagy-specific VPS34 PI3-kinase complex I. This complex is essential to recruit the ATG8-phosphatidylinositol conjugate and the ATG12-ATG5 conjugate to the pre-autophagosomal structure. Also involved in endosome-to-Golgi retrograde transport as part of the VPS34 PI3-kinase complex II. This second complex is required for the endosome-to-Golgi retrieval of PEP1 and KEX2, and the recruitment of VPS5 and VPS7, two components of the retromer complex, to endosomal membranes (probably through the synthesis of a specific pool of phosphatidylinositol 3-phosphate recruiting the retromer to the endosomes). Required for survival and/or proliferation in kidneys but not brain. This Candida glabrata (strain ATCC 2001 / BCRC 20586 / JCM 3761 / NBRC 0622 / NRRL Y-65 / CBS 138) (Yeast) protein is Vacuolar protein sorting-associated protein 30.